The sequence spans 215 residues: Putative zinc finger protein ORF121 (215 aa).

The RING-type; degenerate zinc finger occupies 53–105 (CVICMEPTYTKKTLAECDIEGGALRVTTMPCPTHYICDNCIRQEMEDKCPICR).

This is Putative zinc finger protein ORF121 from Magallana gigas (Pacific oyster).